The sequence spans 737 residues: Polyribonucleotide nucleotidyltransferase (737 aa).

2 residues coordinate Mg(2+): Asp-489 and Asp-495. The region spanning Pro-556 to Ile-615 is the KH domain. The S1 motif domain maps to Asp-625 to Lys-693. A disordered region spans residues Ser-691–Glu-737. Residues Pro-700–Pro-714 are compositionally biased toward basic and acidic residues. Residues His-715–Lys-724 are compositionally biased toward basic residues. Over residues Pro-725–Glu-737 the composition is skewed to basic and acidic residues.

Belongs to the polyribonucleotide nucleotidyltransferase family. Mg(2+) is required as a cofactor.

The protein resides in the cytoplasm. The catalysed reaction is RNA(n+1) + phosphate = RNA(n) + a ribonucleoside 5'-diphosphate. Its function is as follows. Involved in mRNA degradation. Catalyzes the phosphorolysis of single-stranded polyribonucleotides processively in the 3'- to 5'-direction. This Streptococcus pneumoniae (strain ATCC 700669 / Spain 23F-1) protein is Polyribonucleotide nucleotidyltransferase.